The primary structure comprises 502 residues: UPF0371 protein CLL_A2797 (502 aa).

This sequence belongs to the UPF0371 family.

In Clostridium botulinum (strain Eklund 17B / Type B), this protein is UPF0371 protein CLL_A2797.